A 353-amino-acid polypeptide reads, in one-letter code: Rhodopsin (353 aa).

The Extracellular segment spans residues 1–36; sequence MNGTEGENFYIPFSNKTGLARSPFEYPQYYLAEPWK. N-linked (GlcNAc...) asparagine glycans are attached at residues N2 and N15. Residues 37–61 form a helical membrane-spanning segment; that stretch reads YSVLAAYMFFLILVGFPVNFLTLFV. The Cytoplasmic portion of the chain corresponds to 62–73; the sequence is TVQHKKLRTPLN. A helical transmembrane segment spans residues 74–96; the sequence is YILLNLAVANLFMVLFGFTLTMY. At 97-110 the chain is on the extracellular side; that stretch reads SSMNGYFVFGPTMC. A disulfide bridge connects residues C110 and C187. The helical transmembrane segment at 111 to 133 threads the bilayer; that stretch reads NFEGFFATLGGEMSLWSLVVLAI. The 'Ionic lock' involved in activated form stabilization motif lies at 134–136; that stretch reads ERY. The Cytoplasmic segment spans residues 134–152; the sequence is ERYIVICKPMGNFRFGSTH. The helical transmembrane segment at 153-173 threads the bilayer; the sequence is AYMGVAFTWFMALSCAAPPLV. Topologically, residues 174–202 are extracellular; that stretch reads GWSRYLPEGMQCSCGPDYYTLNPNFNNES. The helical transmembrane segment at 203–224 threads the bilayer; that stretch reads FVIYMFLVHFIIPFIVIFFCYG. The Cytoplasmic portion of the chain corresponds to 225–252; sequence RLLCTVKEAAAAQQESASTQKAEKEVTR. A helical membrane pass occupies residues 253–274; the sequence is MVVLMVIGFLVCWVPYASVAFY. Residues 275 to 286 are Extracellular-facing; it reads IFTHQGSDFGAT. The chain crosses the membrane as a helical span at residues 287 to 308; the sequence is FMTVPAFFAKTSALYNPIIYIL. An N6-(retinylidene)lysine modification is found at K296. Residues 309–353 are Cytoplasmic-facing; it reads MNKQFRNCMITTLCCGKNPLGDEDSGASTSKTEVSSVSTSQVSPA. Residues 330–353 are disordered; that stretch reads DEDSGASTSKTEVSSVSTSQVSPA. Residues 336–353 are compositionally biased toward low complexity; the sequence is STSKTEVSSVSTSQVSPA.

Belongs to the G-protein coupled receptor 1 family. Opsin subfamily. Phosphorylated on some or all of the serine and threonine residues present in the C-terminal region. Post-translationally, contains one covalently linked retinal chromophore.

The protein localises to the membrane. The protein resides in the cell projection. Its subcellular location is the cilium. It localises to the photoreceptor outer segment. In terms of biological role, photoreceptor required for image-forming vision at low light intensity. While most salt water fish species use retinal as chromophore, most freshwater fish use 3-dehydroretinal, or a mixture of retinal and 3-dehydroretinal. Light-induced isomerization of 11-cis to all-trans retinal triggers a conformational change that activates signaling via G-proteins. Subsequent receptor phosphorylation mediates displacement of the bound G-protein alpha subunit by arrestin and terminates signaling. This Petromyzon marinus (Sea lamprey) protein is Rhodopsin (RHO).